Consider the following 90-residue polypeptide: Probable Fe(2+)-trafficking protein (90 aa).

This sequence belongs to the Fe(2+)-trafficking protein family.

Its function is as follows. Could be a mediator in iron transactions between iron acquisition and iron-requiring processes, such as synthesis and/or repair of Fe-S clusters in biosynthetic enzymes. This chain is Probable Fe(2+)-trafficking protein, found in Delftia acidovorans (strain DSM 14801 / SPH-1).